Consider the following 61-residue polypeptide: Small ribosomal subunit protein uS14 (61 aa).

Zn(2+) contacts are provided by Cys24, Cys27, Cys40, and Cys43.

This sequence belongs to the universal ribosomal protein uS14 family. Zinc-binding uS14 subfamily. In terms of assembly, part of the 30S ribosomal subunit. Contacts proteins S3 and S10. Zn(2+) serves as cofactor.

Binds 16S rRNA, required for the assembly of 30S particles and may also be responsible for determining the conformation of the 16S rRNA at the A site. The protein is Small ribosomal subunit protein uS14 of Campylobacter fetus subsp. fetus (strain 82-40).